The chain runs to 298 residues: Flavin-dependent thymidylate synthase (298 aa).

The ThyX domain occupies 41 to 251 (GFVRLVDYMG…PLTYAAFVEY (211 aa)). FAD is bound by residues Thr-87, 110–112 (RHR), and Glu-118. DUMP-binding positions include 107–110 (QWVR), 118–122 (EYSAR), and Arg-190. Residues 110-120 (RHRTANVNEYS) carry the ThyX motif motif. FAD contacts are provided by residues 206-208 (DLH) and His-212. Position 217 (Arg-217) interacts with dUMP. Residue Arg-217 is the Involved in ionization of N3 of dUMP, leading to its activation of the active site.

The protein belongs to the thymidylate synthase ThyX family. Homotetramer. FAD serves as cofactor.

It carries out the reaction dUMP + (6R)-5,10-methylene-5,6,7,8-tetrahydrofolate + NADPH + H(+) = dTMP + (6S)-5,6,7,8-tetrahydrofolate + NADP(+). It participates in pyrimidine metabolism; dTTP biosynthesis. In terms of biological role, catalyzes the reductive methylation of 2'-deoxyuridine-5'-monophosphate (dUMP) to 2'-deoxythymidine-5'-monophosphate (dTMP) while utilizing 5,10-methylenetetrahydrofolate (mTHF) as the methyl donor, and NADPH and FADH(2) as the reductant. This Ehrlichia ruminantium (strain Welgevonden) protein is Flavin-dependent thymidylate synthase.